A 174-amino-acid chain; its full sequence is RNA pyrophosphohydrolase (174 aa).

In terms of domain architecture, Nudix hydrolase spans 6-149; it reads GYRPNVGIIL…KRDVYLEALK (144 aa). The short motif at 38-59 is the Nudix box element; that stretch reads GGIKPGESPETAMYRELYEEVG.

Belongs to the Nudix hydrolase family. RppH subfamily. It depends on a divalent metal cation as a cofactor.

Functionally, accelerates the degradation of transcripts by removing pyrophosphate from the 5'-end of triphosphorylated RNA, leading to a more labile monophosphorylated state that can stimulate subsequent ribonuclease cleavage. The sequence is that of RNA pyrophosphohydrolase from Neisseria gonorrhoeae (strain ATCC 700825 / FA 1090).